The following is an 88-amino-acid chain: Small ribosomal subunit protein bS16 (88 aa).

Belongs to the bacterial ribosomal protein bS16 family.

The sequence is that of Small ribosomal subunit protein bS16 from Buchnera aphidicola subsp. Cinara cedri (strain Cc).